Here is a 1562-residue protein sequence, read N- to C-terminus: E3 ubiquitin-protein ligase listerin (1562 aa).

HEAT repeat units follow at residues 41–78 (SLYS…DFNQ), 127–164 (KFLK…KDPA), 175–217 (EQLL…SAVL), 262–301 (ETVL…ITSK), 304–348 (LKVC…VSRT), 495–532 (SAIS…FLDS), 555–592 (STYQ…VALS), 813–850 (IRYA…DYNC), 908–945 (YYSR…KTVR), 997–1037 (FKSL…WLDS), 1047–1085 (TVRL…DSLS), 1188–1226 (INQS…SDVD), 1263–1298 (NSFI…KEAG), and 1299–1339 (LINR…NFSP). The RING-type zinc-finger motif lies at 1508 to 1555 (CAICYSILHAVDRKLPSKTCPTCKNKFHGACLYKWFRSSGNNTCPLCR).

Belongs to the LTN1 family. As to quaternary structure, component of the ribosome quality control complex (RQC), composed of the E3 ubiquitin ligase RKR1/LTN1, RQC1 and RQC2, as well as CDC48 and its ubiquitin-binding cofactors associated with the 60S ribosomal subunits.

The protein resides in the nucleus. It localises to the cytoplasm. Its subcellular location is the cytosol. The catalysed reaction is S-ubiquitinyl-[E2 ubiquitin-conjugating enzyme]-L-cysteine + [acceptor protein]-L-lysine = [E2 ubiquitin-conjugating enzyme]-L-cysteine + N(6)-ubiquitinyl-[acceptor protein]-L-lysine.. It participates in protein modification; protein ubiquitination. Its function is as follows. E3 ubiquitin-protein ligase component of the ribosome quality control complex (RQC), a ribosome-associated complex that mediates ubiquitination and extraction of incompletely synthesized nascent chains for proteasomal degradation. Mediates ubiquitination of proteins derived from mRNAs lacking stop codons (non-stop proteins) and other translation arrest products induced by poly-lysine sequences and tandem rare codons. Ubiquitination leads to CDC48 recruitment for extraction and degradation of the incomplete translation product. May indirectly play a role in chromatin function and transcription. The sequence is that of E3 ubiquitin-protein ligase listerin from Saccharomyces cerevisiae (strain ATCC 204508 / S288c) (Baker's yeast).